A 189-amino-acid chain; its full sequence is Tumor protein p53-inducible protein 11 (189 aa).

The Cytoplasmic segment spans residues 1 to 63 (MAAKQPPPLM…FAVREPLGLR (63 aa)). The residue at position 14 (Ser-14) is a Phosphoserine. A helical membrane pass occupies residues 64 to 84 (VWQFLSAMLFSSVAIMALALP). Topologically, residues 85–108 (DQLYDAVFDGAEVTSKTPIRLYGG) are extracellular. A helical transmembrane segment spans residues 109–129 (ALLSISLIMWNALYTAEKVII). Residue Arg-130 is a topological domain, cytoplasmic. The chain crosses the membrane as a helical span at residues 131 to 151 (WTLLTEACYFGVQSLVVTATL). Residues 152-155 (AETG) are Extracellular-facing. The helical transmembrane segment at 156-176 (LMSLGTLLLLASRLLFVIVSI) threads the bilayer. Topologically, residues 177–189 (YYYYQVGRKPKKV) are cytoplasmic.

It localises to the membrane. This is Tumor protein p53-inducible protein 11 (Tp53i11) from Rattus norvegicus (Rat).